A 62-amino-acid polypeptide reads, in one-letter code: Chromatin protein Cren7 2 (62 aa).

The protein belongs to the Cren7 family. In terms of assembly, monomer. In terms of processing, methylated at multiple sites, to varying extents.

The protein localises to the chromosome. It is found in the cytoplasm. Its function is as follows. A chromatin protein, binds double-stranded DNA without sequence specificity. Constrains negative DNA supercoils. This chain is Chromatin protein Cren7 2 (cren7-2), found in Hyperthermus butylicus (strain DSM 5456 / JCM 9403 / PLM1-5).